The sequence spans 347 residues: tRNA N6-adenosine threonylcarbamoyltransferase (347 aa).

The Fe cation site is built by H111 and H115. Residues 134–138 (LVSGG), D167, G180, and N276 each bind substrate. D304 is a Fe cation binding site.

Belongs to the KAE1 / TsaD family. Fe(2+) serves as cofactor.

It localises to the cytoplasm. It carries out the reaction L-threonylcarbamoyladenylate + adenosine(37) in tRNA = N(6)-L-threonylcarbamoyladenosine(37) in tRNA + AMP + H(+). Required for the formation of a threonylcarbamoyl group on adenosine at position 37 (t(6)A37) in tRNAs that read codons beginning with adenine. Is involved in the transfer of the threonylcarbamoyl moiety of threonylcarbamoyl-AMP (TC-AMP) to the N6 group of A37, together with TsaE and TsaB. TsaD likely plays a direct catalytic role in this reaction. The sequence is that of tRNA N6-adenosine threonylcarbamoyltransferase from Nitrosospira multiformis (strain ATCC 25196 / NCIMB 11849 / C 71).